The primary structure comprises 134 residues: Small ribosomal subunit protein uS11 (134 aa).

Belongs to the universal ribosomal protein uS11 family. Part of the 30S ribosomal subunit. Interacts with proteins S7 and S18. Binds to IF-3.

In terms of biological role, located on the platform of the 30S subunit, it bridges several disparate RNA helices of the 16S rRNA. Forms part of the Shine-Dalgarno cleft in the 70S ribosome. The sequence is that of Small ribosomal subunit protein uS11 from Corynebacterium jeikeium (strain K411).